A 177-amino-acid chain; its full sequence is ATP synthase subunit delta 1 (177 aa).

Belongs to the ATPase delta chain family. In terms of assembly, F-type ATPases have 2 components, F(1) - the catalytic core - and F(0) - the membrane proton channel. F(1) has five subunits: alpha(3), beta(3), gamma(1), delta(1), epsilon(1). F(0) has three main subunits: a(1), b(2) and c(10-14). The alpha and beta chains form an alternating ring which encloses part of the gamma chain. F(1) is attached to F(0) by a central stalk formed by the gamma and epsilon chains, while a peripheral stalk is formed by the delta and b chains.

Its subcellular location is the cell inner membrane. Functionally, f(1)F(0) ATP synthase produces ATP from ADP in the presence of a proton or sodium gradient. F-type ATPases consist of two structural domains, F(1) containing the extramembraneous catalytic core and F(0) containing the membrane proton channel, linked together by a central stalk and a peripheral stalk. During catalysis, ATP synthesis in the catalytic domain of F(1) is coupled via a rotary mechanism of the central stalk subunits to proton translocation. Its function is as follows. This protein is part of the stalk that links CF(0) to CF(1). It either transmits conformational changes from CF(0) to CF(1) or is implicated in proton conduction. This chain is ATP synthase subunit delta 1, found in Photobacterium profundum (strain SS9).